The sequence spans 527 residues: Transcription factor bHLH157 (527 aa).

2 disordered regions span residues 295–318 and 335–368; these read SGVNQSKRRKLDTSSAHSSSLFPQ and SSIGGNWKKPHEEGVKKKRAKAGESRRPRPKDRQ. The span at 307 to 318 shows a compositional bias: polar residues; sequence TSSAHSSSLFPQ. The Nuclear localization signal signature appears at 341 to 348; sequence WKKPHEEG. Residues 343–368 show a composition bias toward basic and acidic residues; it reads KPHEEGVKKKRAKAGESRRPRPKDRQ. The bHLH domain maps to 354–403; sequence AKAGESRRPRPKDRQMIQDRIKELRGMIPNGAKCSIDTLLDLTIKHMVFM.

Belongs to the bHLH protein family. LHW subfamily. In terms of assembly, homodimer.

Its subcellular location is the nucleus. Transcription factor that may regulate root development. This is Transcription factor bHLH157 (BHLH157) from Arabidopsis thaliana (Mouse-ear cress).